Consider the following 513-residue polypeptide: Cytochrome P450 4d10 (513 aa).

Heme contacts are provided by Glu-317 and Cys-457.

The protein belongs to the cytochrome P450 family. Heme is required as a cofactor.

The protein localises to the endoplasmic reticulum membrane. It is found in the microsome membrane. Functionally, may play an important role in the maintenance of specific insect-host plant relationships. May be involved in xenobiotic metabolism. The polypeptide is Cytochrome P450 4d10 (Cyp4d10) (Drosophila mettleri (Fruit fly)).